The sequence spans 224 residues: Ribose-5-phosphate isomerase A (224 aa).

Residues 32-35 (TGST), 85-88 (DGAD), and 98-101 (KGGG) each bind substrate. The active-site Proton acceptor is the E107. K125 provides a ligand contact to substrate.

It belongs to the ribose 5-phosphate isomerase family. Homodimer.

It carries out the reaction aldehydo-D-ribose 5-phosphate = D-ribulose 5-phosphate. The protein operates within carbohydrate degradation; pentose phosphate pathway; D-ribose 5-phosphate from D-ribulose 5-phosphate (non-oxidative stage): step 1/1. Its function is as follows. Catalyzes the reversible conversion of ribose-5-phosphate to ribulose 5-phosphate. The polypeptide is Ribose-5-phosphate isomerase A (Pseudomonas putida (strain ATCC 700007 / DSM 6899 / JCM 31910 / BCRC 17059 / LMG 24140 / F1)).